We begin with the raw amino-acid sequence, 232 residues long: Phosphatidylserine decarboxylase proenzyme (232 aa).

The active-site Schiff-base intermediate with substrate; via pyruvic acid is the Ser-190. Residue Ser-190 is modified to Pyruvic acid (Ser); by autocatalysis.

Belongs to the phosphatidylserine decarboxylase family. PSD-A subfamily. In terms of assembly, heterodimer of a large membrane-associated beta subunit and a small pyruvoyl-containing alpha subunit. Requires pyruvate as cofactor. Post-translationally, is synthesized initially as an inactive proenzyme. Formation of the active enzyme involves a self-maturation process in which the active site pyruvoyl group is generated from an internal serine residue via an autocatalytic post-translational modification. Two non-identical subunits are generated from the proenzyme in this reaction, and the pyruvate is formed at the N-terminus of the alpha chain, which is derived from the carboxyl end of the proenzyme. The post-translation cleavage follows an unusual pathway, termed non-hydrolytic serinolysis, in which the side chain hydroxyl group of the serine supplies its oxygen atom to form the C-terminus of the beta chain, while the remainder of the serine residue undergoes an oxidative deamination to produce ammonia and the pyruvoyl prosthetic group on the alpha chain.

It localises to the cell membrane. It carries out the reaction a 1,2-diacyl-sn-glycero-3-phospho-L-serine + H(+) = a 1,2-diacyl-sn-glycero-3-phosphoethanolamine + CO2. It participates in phospholipid metabolism; phosphatidylethanolamine biosynthesis; phosphatidylethanolamine from CDP-diacylglycerol: step 2/2. Its function is as follows. Catalyzes the formation of phosphatidylethanolamine (PtdEtn) from phosphatidylserine (PtdSer). This Rhodopseudomonas palustris (strain BisA53) protein is Phosphatidylserine decarboxylase proenzyme.